The chain runs to 419 residues: O-methyltransferase desB (419 aa).

S-adenosyl-L-methionine-binding positions include 255–256 (GG), D280, 306–307 (DF), and R323. Catalysis depends on H326, which acts as the Proton acceptor.

It belongs to the class I-like SAM-binding methyltransferase superfamily. Cation-independent O-methyltransferase family. It depends on S-adenosyl-L-methionine as a cofactor.

Its pathway is secondary metabolite biosynthesis. Its function is as follows. Non-reducing polyketide synthase; part of the gene cluster that mediates the biosynthesis of the bicoumarin desertorin. The non-reducing polyketide synthase desS first catalyzes the formation of the pentaketidic 4,7-dihydroxy-5-methylcoumarin from acetyl coenzyme A and 4 malonyl coenzyme A molecules. Further O-methylation by desB leads to the formation of 7-demethylsiderin. Then, an oxidative phenol coupling catalyzed by the cytochrome P450 monooxygenase desC forms the 6,8'-dimer M-desertorin A via dimerization the monomeric precursor, 7-demethylsiderin. M-desertorin A is further converted to M-desertorin C. The protein is O-methyltransferase desB of Aspergillus desertorum (Emericella desertorum).